A 123-amino-acid polypeptide reads, in one-letter code: Transmembrane protein 254 (123 aa).

Ala-2 carries the N-acetylalanine modification. 3 helical membrane-spanning segments follow: residues 15–35 (LFWF…VFWP), 61–81 (LCNG…YAIV), and 95–115 (LLWF…LIAY).

Its subcellular location is the membrane. The polypeptide is Transmembrane protein 254 (TMEM254) (Homo sapiens (Human)).